A 211-amino-acid chain; its full sequence is MMGKLEKPVIIGIAGGSGSGKTTIAHEIANNINEHDRIMIMSQDSYYQDNTGVPMEKRMKINYDHPDAFDMPLLEAQLNQLLHRKPIELPTYDFTQHTRSNETIHVEPADIIILEGILVLFNEDIRNLMDIKVYVDTDDDIRFIRRLERDMKERGRSLDSVINQYLGTVKPMYNQFIEPTKRYADIIVPEGGENDVAIDMLTTKLQSVLNQ.

15–22 provides a ligand contact to ATP; it reads GGSGSGKT.

Belongs to the uridine kinase family.

The protein localises to the cytoplasm. It carries out the reaction uridine + ATP = UMP + ADP + H(+). The catalysed reaction is cytidine + ATP = CMP + ADP + H(+). It functions in the pathway pyrimidine metabolism; CTP biosynthesis via salvage pathway; CTP from cytidine: step 1/3. It participates in pyrimidine metabolism; UMP biosynthesis via salvage pathway; UMP from uridine: step 1/1. The sequence is that of Uridine kinase from Lactobacillus helveticus (strain DPC 4571).